Reading from the N-terminus, the 324-residue chain is Kelch domain-containing protein AF_2170 (324 aa).

Kelch repeat units lie at residues 229–276 (YIFA…VGGE) and 277–323 (YIYI…NNGK).

The protein is Kelch domain-containing protein AF_2170 of Archaeoglobus fulgidus (strain ATCC 49558 / DSM 4304 / JCM 9628 / NBRC 100126 / VC-16).